A 113-amino-acid polypeptide reads, in one-letter code: UPF0482 protein KPK_2871 (113 aa).

The N-terminal stretch at 1-28 (MNMTLNKRWCLTAILALSAVVYTSSSFA) is a signal peptide. Residues 38–61 (GDSAQSRQQASMEKEQWNDTRSLR) are disordered. Over residues 39-48 (DSAQSRQQAS) the composition is skewed to polar residues. Over residues 49 to 59 (MEKEQWNDTRS) the composition is skewed to basic and acidic residues.

The protein belongs to the UPF0482 family.

This Klebsiella pneumoniae (strain 342) protein is UPF0482 protein KPK_2871.